We begin with the raw amino-acid sequence, 158 residues long: MLSPKRVKFRKQQRGRMRGVATRGNTIAFGQFALQAQECGWITSRQIEASRRAMTRYVKRGGKIWIRIFPDKPVTMRAAETRMGSGKGNPEFWVAVIKPGRILFEMGGDEITPEIAKEAMRLAQYKLPVKTKFIQLDEQEKSAGAKAPAASEAITVES.

It belongs to the universal ribosomal protein uL16 family. As to quaternary structure, part of the 50S ribosomal subunit.

In terms of biological role, binds 23S rRNA and is also seen to make contacts with the A and possibly P site tRNAs. The chain is Large ribosomal subunit protein uL16 from Synechococcus sp. (strain CC9605).